The sequence spans 215 residues: Orotate phosphoribosyltransferase (215 aa).

5-phospho-alpha-D-ribose 1-diphosphate is bound at residue Lys-26. Phe-34 to Phe-35 lines the orotate pocket. Residues Tyr-72–Lys-73, Arg-99, Lys-100, Lys-103, His-105, and Asp-124–Ala-132 contribute to the 5-phospho-alpha-D-ribose 1-diphosphate site. The orotate site is built by Thr-128 and Arg-156.

Belongs to the purine/pyrimidine phosphoribosyltransferase family. PyrE subfamily. Homodimer. It depends on Mg(2+) as a cofactor.

The catalysed reaction is orotidine 5'-phosphate + diphosphate = orotate + 5-phospho-alpha-D-ribose 1-diphosphate. The protein operates within pyrimidine metabolism; UMP biosynthesis via de novo pathway; UMP from orotate: step 1/2. In terms of biological role, catalyzes the transfer of a ribosyl phosphate group from 5-phosphoribose 1-diphosphate to orotate, leading to the formation of orotidine monophosphate (OMP). This chain is Orotate phosphoribosyltransferase, found in Stutzerimonas stutzeri (strain A1501) (Pseudomonas stutzeri).